The primary structure comprises 34 residues: Potassium channel toxin alpha-KTx 6.17 (34 aa).

Cystine bridges form between C3–C24, C9–C29, C13–C31, and C19–C34.

The protein belongs to the short scorpion toxin superfamily. Potassium channel inhibitor family. Alpha-KTx 06 subfamily. As to expression, expressed by the venom gland.

It is found in the secreted. Functionally, this toxin reversibly blocks Shaker B potassium-channels (expressed in insect Sf9 cells) with a Kd of 96.6 nM, and presents an even better affinity toward hKv1.3 (KCNA3), blocking it with a Kd of 17.7 nM. The sequence is that of Potassium channel toxin alpha-KTx 6.17 from Opisthacanthus cayaporum (South American scorpion).